A 375-amino-acid polypeptide reads, in one-letter code: Sulfite efflux pump SSU1 (375 aa).

Over 1–25 the chain is Cytoplasmic; it reads MPSGSGFHNIEEAGEKARKRDDWIA. The helical transmembrane segment at 26–46 threads the bilayer; the sequence is ISNFHPGWFSVNMGTGITAIL. Residues 47–59 are Extracellular-facing; the sequence is LQNLPYQFPGLHY. The helical transmembrane segment at 60–80 threads the bilayer; it reads IAVILFILNVIIFFLFLTISI. Residues 81 to 101 are Cytoplasmic-facing; the sequence is TRYCLWPDKFKAMLAHPAHSM. The chain crosses the membrane as a helical span at residues 102-122; the sequence is LLGTFPMGFATIINCIVFICV. The Extracellular segment spans residues 123–135; it reads PVWGEWASRFAWG. A helical membrane pass occupies residues 136 to 156; sequence LWWIDAAVSVAICYFVPFMLM. Over 157–167 the chain is Cytoplasmic; it reads TKHTSSLETMT. Residues 168–188 form a helical membrane-spanning segment; that stretch reads AAWLLPIVAPVVAAASGGVVA. The Extracellular portion of the chain corresponds to 189-200; the sequence is DSLQNDTHALIT. An N-linked (GlcNAc...) asparagine glycan is attached at Asn-193. A helical membrane pass occupies residues 201-221; the sequence is ILVCYVMWGSAVPLAMVILVI. Residues 222–234 lie on the Cytoplasmic side of the membrane; sequence YFQRLAIHKLVPR. Residues 235-255 form a helical membrane-spanning segment; it reads AAIVSALLPIGPLGQGGFGLM. Topologically, residues 256–277 are extracellular; the sequence is QLGVVAKRVFPRLDFLAPIAGD. Residues 278-298 form a helical membrane-spanning segment; it reads IFYVMGAFIAMIMWGFGLIWL. The Cytoplasmic portion of the chain corresponds to 299–309; sequence WFALASFTRGK. A helical membrane pass occupies residues 310 to 330; it reads FYFNIGWWAFTFPLGVFTTAT. Residues 331–343 are Extracellular-facing; that stretch reads TQMGKEFNSPFFD. A helical membrane pass occupies residues 344 to 364; the sequence is ILGTFFSIVVTCMWVLVFALT. Over 365 to 375 the chain is Cytoplasmic; sequence VYKSCTKELFR.

The protein belongs to the tellurite-resistance/dicarboxylate transporter (TDT) family.

It is found in the cell membrane. Functionally, sulphite efflux pump required for the secretion of sulphite as a reducing agent. In the presence of sulphite, cystine in keratin is directly cleaved to cysteine and S-sulphocysteine, and thereby, reduced proteins become accessible to hydrolysis by a variety of secreted endo- and exoproteases. Excretion of sulphite mediated by an efflux pump also represents a detoxification pathway for dermatophytes during infection of the epidermal stratum corneum, hair and nails, which are rich in cysteine. This Arthroderma benhamiae (strain ATCC MYA-4681 / CBS 112371) (Trichophyton mentagrophytes) protein is Sulfite efflux pump SSU1.